A 309-amino-acid chain; its full sequence is Tagatose-6-phosphate kinase (309 aa).

Belongs to the carbohydrate kinase PfkB family. LacC subfamily.

The catalysed reaction is D-tagatofuranose 6-phosphate + ATP = D-tagatofuranose 1,6-bisphosphate + ADP + H(+). It functions in the pathway carbohydrate metabolism; D-tagatose 6-phosphate degradation; D-glyceraldehyde 3-phosphate and glycerone phosphate from D-tagatose 6-phosphate: step 1/2. This chain is Tagatose-6-phosphate kinase, found in Streptococcus pneumoniae (strain ATCC 700669 / Spain 23F-1).